A 1105-amino-acid chain; its full sequence is Ran-binding protein 6 (1105 aa).

N-acetylalanine is present on alanine 2. HEAT repeat units follow at residues 219–257, 361–399, 402–440, and 444–483; these read FKDFADLLPGILQAVNDSCYQDDDSVLESLVEIADTVPK, KVVLPMTKEHIMQMLQSPDWKYRHAGLMALSAIGEGCHQ, ESILDETVNSVLLFLQDPHPRVRAAACTTLGQMATDFAP, and KKFHETVIAALLRTMENQGNQRVQSHAASALIIFIEDCPK. The interval 333–383 is ran-GTP binding; the sequence is DEMEEDDFDSNAVAAESALDRLACGLGGKVVLPMTKEHIMQMLQSPDWKYR. Residues 806-842 adopt a coiled-coil conformation; that stretch reads KAKLEGHFKNQELRQVKRQEENYDQQVEMSLQDEDEC. HEAT repeat units follow at residues 866–905, 908–946, and 949–987; these read LPWFEQLLPLIVNLICSSRPWPDRQWGLCIFDDIIEHCSP, FKYVEYFRWPMLLNMRDNNPEVRQAAAYGLGVMAQFGGD, and RSLCSEAVPLLVKVIKCANSKTKKNVIATENCISAIGKI.

Belongs to the importin beta family.

The protein localises to the cytoplasm. It localises to the nucleus. May function in nuclear protein import as nuclear transport receptor. The chain is Ran-binding protein 6 (RANBP6) from Homo sapiens (Human).